The primary structure comprises 555 residues: CTP synthase (555 aa).

Residues 1–267 are amidoligase domain; the sequence is MTKFVFVTGG…AQQVLKFMHL (267 aa). Ser-13 lines the CTP pocket. Position 13 (Ser-13) interacts with UTP. Residues 14-19 and Asp-71 contribute to the ATP site; that span reads SIGKGI. Mg(2+) is bound by residues Asp-71 and Glu-141. CTP is bound by residues 148-150, 188-193, and Lys-224; these read DIE and KTKPTQ. Residues 188-193 and Lys-224 contribute to the UTP site; that span reads KTKPTQ. Ala-242 contributes to the ATP binding site. One can recognise a Glutamine amidotransferase type-1 domain in the interval 299–535; the sequence is YVQLSDAYLS…VGACLADNGN (237 aa). Gly-354 is a binding site for L-glutamine. Cys-381 acts as the Nucleophile; for glutamine hydrolysis in catalysis. Residues 382–385, Glu-405, and Arg-463 contribute to the L-glutamine site; that span reads LGMQ. Residues His-508 and Glu-510 contribute to the active site. The disordered stretch occupies residues 536-555; sequence NANHHDSTPAEPLVSEPLSS.

This sequence belongs to the CTP synthase family. Homotetramer.

It carries out the reaction UTP + L-glutamine + ATP + H2O = CTP + L-glutamate + ADP + phosphate + 2 H(+). The catalysed reaction is L-glutamine + H2O = L-glutamate + NH4(+). It catalyses the reaction UTP + NH4(+) + ATP = CTP + ADP + phosphate + 2 H(+). It functions in the pathway pyrimidine metabolism; CTP biosynthesis via de novo pathway; CTP from UDP: step 2/2. Its activity is regulated as follows. Allosterically activated by GTP, when glutamine is the substrate; GTP has no effect on the reaction when ammonia is the substrate. The allosteric effector GTP functions by stabilizing the protein conformation that binds the tetrahedral intermediate(s) formed during glutamine hydrolysis. Inhibited by the product CTP, via allosteric rather than competitive inhibition. Functionally, catalyzes the ATP-dependent amination of UTP to CTP with either L-glutamine or ammonia as the source of nitrogen. Regulates intracellular CTP levels through interactions with the four ribonucleotide triphosphates. This chain is CTP synthase, found in Acaryochloris marina (strain MBIC 11017).